Here is a 238-residue protein sequence, read N- to C-terminus: Ribonuclease PH (238 aa).

Phosphate-binding positions include R86 and 124-126 (GTR).

This sequence belongs to the RNase PH family. As to quaternary structure, homohexameric ring arranged as a trimer of dimers.

The enzyme catalyses tRNA(n+1) + phosphate = tRNA(n) + a ribonucleoside 5'-diphosphate. Its function is as follows. Phosphorolytic 3'-5' exoribonuclease that plays an important role in tRNA 3'-end maturation. Removes nucleotide residues following the 3'-CCA terminus of tRNAs; can also add nucleotides to the ends of RNA molecules by using nucleoside diphosphates as substrates, but this may not be physiologically important. Probably plays a role in initiation of 16S rRNA degradation (leading to ribosome degradation) during starvation. This is Ribonuclease PH from Halorhodospira halophila (strain DSM 244 / SL1) (Ectothiorhodospira halophila (strain DSM 244 / SL1)).